The sequence spans 379 residues: Carbamoyl phosphate synthase small chain (379 aa).

Residues 1–184 are CPSase; it reads MVSLYLENGL…LDYKPFDEKN (184 aa). L-glutamine-binding residues include Ser44, Gly240, and Gly242. The Glutamine amidotransferase type-1 domain maps to 188 to 378; that stretch reads TIAVLDFGAK…VKLLENFPTR (191 aa). The Nucleophile role is filled by Cys268. Residues Leu269, Gln272, Asn310, and Tyr313 each coordinate L-glutamine. Residues His351 and Glu353 contribute to the active site.

It belongs to the CarA family. As to quaternary structure, composed of two chains; the small (or glutamine) chain promotes the hydrolysis of glutamine to ammonia, which is used by the large (or ammonia) chain to synthesize carbamoyl phosphate. Tetramer of heterodimers (alpha,beta)4.

The catalysed reaction is hydrogencarbonate + L-glutamine + 2 ATP + H2O = carbamoyl phosphate + L-glutamate + 2 ADP + phosphate + 2 H(+). It carries out the reaction L-glutamine + H2O = L-glutamate + NH4(+). It functions in the pathway amino-acid biosynthesis; L-arginine biosynthesis; carbamoyl phosphate from bicarbonate: step 1/1. It participates in pyrimidine metabolism; UMP biosynthesis via de novo pathway; (S)-dihydroorotate from bicarbonate: step 1/3. Small subunit of the glutamine-dependent carbamoyl phosphate synthetase (CPSase). CPSase catalyzes the formation of carbamoyl phosphate from the ammonia moiety of glutamine, carbonate, and phosphate donated by ATP, constituting the first step of 2 biosynthetic pathways, one leading to arginine and/or urea and the other to pyrimidine nucleotides. The small subunit (glutamine amidotransferase) binds and cleaves glutamine to supply the large subunit with the substrate ammonia. The protein is Carbamoyl phosphate synthase small chain of Helicobacter acinonychis (strain Sheeba).